The sequence spans 561 residues: Zinc finger protein 394 (561 aa).

The interval 1 to 61 (MNSSLTAQRR…NYPAASPDPE (61 aa)) is disordered. Ser12 carries the phosphoserine modification. Residue Lys40 forms a Glycyl lysine isopeptide (Lys-Gly) (interchain with G-Cter in SUMO2) linkage. An SCAN box domain is found at 64–146 (RLHFRQLRYQ…AVVRALQRAL (83 aa)). The 76-residue stretch at 155-230 (VTFEDTAVSL…LQEAFQGKRP (76 aa)) folds into the KRAB domain. A disordered region spans residues 182-201 (ESAQKDSGSTVPPSLESRVE). Residues Lys203 and Lys228 each participate in a glycyl lysine isopeptide (Lys-Gly) (interchain with G-Cter in SUMO2) cross-link. The disordered stretch occupies residues 231-285 (LFSKCGSTHEDRVEKQSGDPLPLKLENSPEAEGLNSISDVNKNGSIEGEDSKNNE). Residues 237 to 247 (STHEDRVEKQS) are compositionally biased toward basic and acidic residues. Lys254 participates in a covalent cross-link: Glycyl lysine isopeptide (Lys-Gly) (interchain with G-Cter in SUMO2). The segment covering 265–274 (NSISDVNKNG) has biased composition (polar residues). Lys282 participates in a covalent cross-link: Glycyl lysine isopeptide (Lys-Gly) (interchain with G-Cter in SUMO2). 7 consecutive C2H2-type zinc fingers follow at residues 358–380 (YKCG…QRIH), 386–408 (YGCQ…QRTH), 414–436 (YTCL…QSTH), 442–463 (FKCE…QRLH), 469–491 (YKCE…HRIH), 497–519 (YGCS…QRIH), and 525–547 (YKCL…QRIH). Residue Lys443 forms a Glycyl lysine isopeptide (Lys-Gly) (interchain with G-Cter in SUMO2) linkage.

Belongs to the krueppel C2H2-type zinc-finger protein family.

The protein resides in the nucleus. May be involved in transcriptional regulation. This chain is Zinc finger protein 394 (ZNF394), found in Homo sapiens (Human).